The primary structure comprises 296 residues: 4-hydroxybenzoate octaprenyltransferase (296 aa).

The next 8 helical transmembrane spans lie at 28-48 (PIGI…AGKG), 52-72 (LKTV…GCVI), 102-122 (ALAL…FTNA), 146-166 (YYPQ…AFTA), 169-189 (GDLP…TVGY), 219-239 (VIIL…GARF), 241-261 (LGAC…WEFW), and 275-295 (FLHN…DYAV).

The protein belongs to the UbiA prenyltransferase family. It depends on Mg(2+) as a cofactor.

The protein resides in the cell inner membrane. It carries out the reaction all-trans-octaprenyl diphosphate + 4-hydroxybenzoate = 4-hydroxy-3-(all-trans-octaprenyl)benzoate + diphosphate. Its pathway is cofactor biosynthesis; ubiquinone biosynthesis. In terms of biological role, catalyzes the prenylation of para-hydroxybenzoate (PHB) with an all-trans polyprenyl group. Mediates the second step in the final reaction sequence of ubiquinone-8 (UQ-8) biosynthesis, which is the condensation of the polyisoprenoid side chain with PHB, generating the first membrane-bound Q intermediate 3-octaprenyl-4-hydroxybenzoate. The sequence is that of 4-hydroxybenzoate octaprenyltransferase from Pseudomonas savastanoi pv. phaseolicola (strain 1448A / Race 6) (Pseudomonas syringae pv. phaseolicola (strain 1448A / Race 6)).